Reading from the N-terminus, the 355-residue chain is MNELKNDRYLRALLRQPVDMTPVWMMRQAGRYLPEYKATRAIAGDFMSLCKNAELACEVTMQPLRRYPLDAAILFSDILTIPDAMGLGLYFETGEGPRFQSPITCRADVEKLPIPDPEQELGYVMNAVRTIRRELAGSVPLIGFSGSPWTLATYMVEGGSSKAFTKLKKMMYAEPQTLHLLLDKLADSVILYLNAQIKAGAQSVMIFDTWGGVLTGRDYHEFSLNYMHKIVDGLIRENEGRRVPVTLFTKGGGQWLEAMAATGCDALGLDWTTDIADARRRVGDKVALQGNMDPSVLYAPPARIEQEVSTILASFGQGEGHVFNLGHGIHQDVPPAHAGAFVNAVHALSRPYHQK.

Substrate-binding positions include 27–31 (RQAGR), Asp77, Tyr154, Thr209, and His327.

The protein belongs to the uroporphyrinogen decarboxylase family. As to quaternary structure, homodimer.

Its subcellular location is the cytoplasm. The enzyme catalyses uroporphyrinogen III + 4 H(+) = coproporphyrinogen III + 4 CO2. The protein operates within porphyrin-containing compound metabolism; protoporphyrin-IX biosynthesis; coproporphyrinogen-III from 5-aminolevulinate: step 4/4. Functionally, catalyzes the decarboxylation of four acetate groups of uroporphyrinogen-III to yield coproporphyrinogen-III. This Yersinia pseudotuberculosis serotype O:1b (strain IP 31758) protein is Uroporphyrinogen decarboxylase.